We begin with the raw amino-acid sequence, 605 residues long: Probable potassium transport system protein Kup 3 (605 aa).

Helical transmembrane passes span A16–F36, I49–A69, V97–I117, G138–V158, F170–F190, G212–L232, A247–I267, L287–I307, I339–F359, A368–F388, A397–K417, and L418–I438.

This sequence belongs to the HAK/KUP transporter (TC 2.A.72) family.

It localises to the cell inner membrane. It carries out the reaction K(+)(in) + H(+)(in) = K(+)(out) + H(+)(out). Functionally, transport of potassium into the cell. Likely operates as a K(+):H(+) symporter. The chain is Probable potassium transport system protein Kup 3 from Geobacter sulfurreducens (strain ATCC 51573 / DSM 12127 / PCA).